Here is a 224-residue protein sequence, read N- to C-terminus: Oocyte zinc finger protein XlCOF6.1 (224 aa).

8 consecutive C2H2-type zinc fingers follow at residues 6–28 (FSCS…CRSH), 34–56 (FHCT…QRYH), 62–84 (FTCF…IRMH), 90–112 (FSCS…QKIH), 118–140 (FSCS…YRTH), 146–168 (FPCP…RRTH), 174–196 (FACS…RLGH), and 202–224 (FSCS…LKSH).

This sequence belongs to the krueppel C2H2-type zinc-finger protein family.

The protein localises to the nucleus. Functionally, may be involved in transcriptional regulation. In Xenopus laevis (African clawed frog), this protein is Oocyte zinc finger protein XlCOF6.1.